We begin with the raw amino-acid sequence, 237 residues long: Methylosome subunit pICln (237 aa).

Ser-2 is subject to N-acetylserine. A phosphoserine mark is found at Ser-102, Ser-144, Ser-193, and Ser-195. Residue Thr-223 is modified to Phosphothreonine.

Belongs to the pICln (TC 1.A.47) family. Component of the methylosome, a 20S complex containing at least PRMT5/SKB1, WDR77/MEP50 and CLNS1A/pICln. May mediate SNRPD1 and SNRPD3 methylation. Forms a 6S pICln-Sm complex composed of CLNS1A/pICln, SNRPD1, SNRPD2, SNRPE, SNRPF and SNRPG; ring-like structure where CLNS1A/pICln mimics additional Sm proteins and which is unable to assemble into the core snRNP. Interacts with LSM10 and LSM11.

The protein resides in the cytoplasm. The protein localises to the cytosol. Its subcellular location is the nucleus. It is found in the cytoskeleton. Involved in both the assembly of spliceosomal snRNPs and the methylation of Sm proteins. Chaperone that regulates the assembly of spliceosomal U1, U2, U4 and U5 small nuclear ribonucleoproteins (snRNPs), the building blocks of the spliceosome, and thereby plays an important role in the splicing of cellular pre-mRNAs. Most spliceosomal snRNPs contain a common set of Sm proteins SNRPB, SNRPD1, SNRPD2, SNRPD3, SNRPE, SNRPF and SNRPG that assemble in a heptameric protein ring on the Sm site of the small nuclear RNA to form the core snRNP (Sm core). In the cytosol, the Sm proteins SNRPD1, SNRPD2, SNRPE, SNRPF and SNRPG are trapped in an inactive 6S pICln-Sm complex by the chaperone CLNS1A that controls the assembly of the core snRNP. Dissociation by the SMN complex of CLNS1A from the trapped Sm proteins and their transfer to an SMN-Sm complex triggers the assembly of core snRNPs and their transport to the nucleus. The polypeptide is Methylosome subunit pICln (CLNS1A) (Pongo abelii (Sumatran orangutan)).